Here is an 85-residue protein sequence, read N- to C-terminus: uncharacterized protein (85 aa).

Belongs to the SF3B5 family.

This is an uncharacterized protein from Schizosaccharomyces pombe (strain 972 / ATCC 24843) (Fission yeast).